Here is a 45-residue protein sequence, read N- to C-terminus: Large ribosomal subunit protein bL34c (45 aa).

Over residues 1 to 10 (MSKGFSNGTN) the composition is skewed to polar residues. The interval 1–45 (MSKGFSNGTNIKRVRKSGFRARMSNSSGRKILNSRRRKQRKKIAL) is disordered. A compositionally biased stretch (basic residues) spans 32–45 (LNSRRRKQRKKIAL).

It belongs to the bacterial ribosomal protein bL34 family.

It localises to the plastid. The protein localises to the chloroplast. The chain is Large ribosomal subunit protein bL34c from Gracilaria tenuistipitata var. liui (Red alga).